Reading from the N-terminus, the 436-residue chain is Eukaryotic peptide chain release factor subunit 1-1 (436 aa).

The protein belongs to the eukaryotic release factor 1 family. Heterodimer of two subunits, one of which binds GTP.

The protein localises to the cytoplasm. Functionally, directs the termination of nascent peptide synthesis (translation) in response to the termination codons UAA, UAG and UGA. Modulates plant growth and development. The chain is Eukaryotic peptide chain release factor subunit 1-1 (ERF1-1) from Arabidopsis thaliana (Mouse-ear cress).